Reading from the N-terminus, the 105-residue chain is Heat shock protein HspQ (105 aa).

This sequence belongs to the HspQ family.

Its subcellular location is the cytoplasm. Functionally, involved in the degradation of certain denaturated proteins, including DnaA, during heat shock stress. The sequence is that of Heat shock protein HspQ from Blochmanniella floridana.